The following is a 250-amino-acid chain: MTIEQNKNRRSAASGCAIHCHDCSMGTLCIPFTLNANELDQLDDIIERKKPIQKGEQIFKSGDPLKSLFAIRSGTIKSYTITEQGDEQITGFHLAGDVIGFDGIHAQSHQSFAQALETSMVCEIPFNILDELSGTMPKLRQQIMRLMSNEIMSDQEMILLLSKKNAEERLAAFISNLANRFGNRGFSAKEFRLTMTRGDIGNYLGLTVETISRLLGRFQKSGLIEVKGKYIIIVDHHELNLLAGNARIAR.

The HTH crp-type domain maps to 164-237 (KNAEERLAAF…GKYIIIVDHH (74 aa)). Residues 197-216 (RGDIGNYLGLTVETISRLLG) constitute a DNA-binding region (H-T-H motif).

Monomer.

Functionally, regulates anaerobic growth on fumarate, nitrite, Fe(3+), TMAO, DMSO, thiosulfate and sulfite, but not on nitrate nor Mn(4+). The chain is Electron transport regulator A (etrA) from Shewanella oneidensis (strain ATCC 700550 / JCM 31522 / CIP 106686 / LMG 19005 / NCIMB 14063 / MR-1).